The sequence spans 839 residues: V-type proton ATPase 116 kDa subunit a 1 (839 aa).

Topologically, residues 1–395 (MGELFRSEEM…DAYGIGTYRE (395 aa)) are cytoplasmic. Residues threonine 257 and threonine 367 each carry the phosphothreonine modification. Phosphotyrosine is present on tyrosine 371. The helical transmembrane segment at 396 to 414 (INPAPYTVITFPFLFAVMF) threads the bilayer. Residues 415 to 416 (GD) lie on the Vacuolar side of the membrane. A helical transmembrane segment spans residues 417–433 (FGHGILMTLFAVWMVLR). Over 434–448 (ESRILSQKHENEMFS) the chain is Cytoplasmic. Residues 449–478 (MVFSGRYIILLMGLFSIYTGLIYNDCFSKS) form a helical membrane-spanning segment. Residues 479 to 542 (LNIFGSSWSV…ATNKLTFLNS (64 aa)) lie on the Vacuolar side of the membrane. The chain crosses the membrane as a helical span at residues 543–562 (FKMKMSVILGIIHMLFGVSL). The Cytoplasmic segment spans residues 563–580 (SLFNHIYFKKPLNIYFGF). Residues 581-601 (IPEIIFMSSLFGYLVILIFYK) traverse the membrane as a helical segment. Over 602–646 (WTAYDAHSSRNAPSLLIHFINMFLFSYPESGNAMLYSGQKGIQCF) the chain is Vacuolar. A helical transmembrane segment spans residues 647 to 666 (LIVVAMLCVPWMLLFKPLIL). Topologically, residues 667–726 (RHQYLRKKHLGTLNFGGIRVGNGPTEEDAEIIQHDQLSTHSEDAEEFDFGDTMVHQAIHT) are cytoplasmic. Residues 727–751 (IEYCLGCISNTASYLRLWALSLAHA) form a helical membrane-spanning segment. The Vacuolar segment spans residues 752–772 (QLSEVLWTMVIHIGLHVRSLA). The chain crosses the membrane as a helical span at residues 773–811 (GGLGLFFIFAAFATLTVAILLIMEGLSAFLHALRLHWVE). The Cytoplasmic portion of the chain corresponds to 812 to 839 (FQNKFYTGTGFKFLPFSFEHIREGKFDE).

Belongs to the V-ATPase 116 kDa subunit family. As to quaternary structure, V-ATPase is a heteromultimeric enzyme made up of two complexes: the ATP-hydrolytic V1 complex and the proton translocation V0 complex. The V1 complex consists of three catalytic AB heterodimers that form a heterohexamer, three peripheral stalks each consisting of EG heterodimers, one central rotor including subunits D and F, and the regulatory subunits C and H. The proton translocation complex V0 consists of the proton transport subunit a, a ring of proteolipid subunits c9c'', rotary subunit d, subunits e and f, and the accessory subunits ATP6AP1/Ac45 and ATP6AP2/PRR. Interacts with SPAAR. In terms of tissue distribution, predominantly expressed in neurons in the cortex and in the dentate gyrus, CA1 and CA3 regions of the hippocampus (at protein level). Expressed at lower levels in astrocytes, oligodendrocytes and microglia (at protein level). In the cerebellum, present in Purkinje and granule cells (at protein level).

Its subcellular location is the cytoplasmic vesicle. The protein resides in the clathrin-coated vesicle membrane. The protein localises to the secretory vesicle. It localises to the synaptic vesicle membrane. It is found in the melanosome. Its function is as follows. Subunit of the V0 complex of vacuolar(H+)-ATPase (V-ATPase), a multisubunit enzyme composed of a peripheral complex (V1) that hydrolyzes ATP and a membrane integral complex (V0) that translocates protons. V-ATPase is responsible for the acidification of various organelles, such as lysosomes, endosomes, the trans-Golgi network, and secretory granules, including synaptic vesicles. In certain cell types, can be exported to the plasma membrane, where it is involved in the acidification of the extracellular environment. Required for assembly and activity of the vacuolar ATPase. Through its action on compartment acidification, plays an essential role in neuronal development in terms of integrity and connectivity of neurons. The polypeptide is V-type proton ATPase 116 kDa subunit a 1 (Atp6v0a1) (Mus musculus (Mouse)).